The sequence spans 179 residues: ATP synthase subunit delta (179 aa).

It belongs to the ATPase delta chain family. F-type ATPases have 2 components, F(1) - the catalytic core - and F(0) - the membrane proton channel. F(1) has five subunits: alpha(3), beta(3), gamma(1), delta(1), epsilon(1). F(0) has three main subunits: a(1), b(2) and c(10-14). The alpha and beta chains form an alternating ring which encloses part of the gamma chain. F(1) is attached to F(0) by a central stalk formed by the gamma and epsilon chains, while a peripheral stalk is formed by the delta and b chains.

Its subcellular location is the cell inner membrane. Functionally, f(1)F(0) ATP synthase produces ATP from ADP in the presence of a proton or sodium gradient. F-type ATPases consist of two structural domains, F(1) containing the extramembraneous catalytic core and F(0) containing the membrane proton channel, linked together by a central stalk and a peripheral stalk. During catalysis, ATP synthesis in the catalytic domain of F(1) is coupled via a rotary mechanism of the central stalk subunits to proton translocation. In terms of biological role, this protein is part of the stalk that links CF(0) to CF(1). It either transmits conformational changes from CF(0) to CF(1) or is implicated in proton conduction. In Burkholderia multivorans (strain ATCC 17616 / 249), this protein is ATP synthase subunit delta.